Consider the following 491-residue polypeptide: 1-aminocyclopropane-1-carboxylate synthase (491 aa).

At Lys278 the chain carries N6-(pyridoxal phosphate)lysine.

It belongs to the class-I pyridoxal-phosphate-dependent aminotransferase family. As to quaternary structure, homodimer. Pyridoxal 5'-phosphate is required as a cofactor.

It catalyses the reaction S-adenosyl-L-methionine = 1-aminocyclopropane-1-carboxylate + S-methyl-5'-thioadenosine + H(+). Its pathway is alkene biosynthesis; ethylene biosynthesis via S-adenosyl-L-methionine; ethylene from S-adenosyl-L-methionine: step 1/2. Its function is as follows. Catalyzes the formation of 1-aminocyclopropane-1-carboxylate, a direct precursor of ethylene in higher plants. This Nicotiana tabacum (Common tobacco) protein is 1-aminocyclopropane-1-carboxylate synthase (ACS1).